We begin with the raw amino-acid sequence, 353 residues long: Photosystem II protein D1 (353 aa).

At Thr2 the chain carries N-acetylthreonine. Thr2 is subject to Phosphothreonine. A run of 3 helical transmembrane segments spans residues 29–46 (YIGW…TATS), 118–133 (HFLL…EWEL), and 142–156 (WIAV…AATA). His118 provides a ligand contact to chlorophyll a. Position 126 (Tyr126) interacts with pheophytin a. Asp170 and Glu189 together coordinate [CaMn4O5] cluster. The chain crosses the membrane as a helical span at residues 197 to 218 (FHMLGVAGVFGGSLFSAMHGSL). Residue His198 participates in chlorophyll a binding. Residues His215 and 264-265 (SF) contribute to the a quinone site. Fe cation is bound at residue His215. A Fe cation-binding site is contributed by His272. A helical membrane pass occupies residues 274-288 (FLAAWPVVGIWFTAL). Residues His332, Glu333, Asp342, and Ala344 each contribute to the [CaMn4O5] cluster site. Residues 345-353 (AMEAPSVNG) constitute a propeptide that is removed on maturation.

The protein belongs to the reaction center PufL/M/PsbA/D family. As to quaternary structure, PSII is composed of 1 copy each of membrane proteins PsbA, PsbB, PsbC, PsbD, PsbE, PsbF, PsbH, PsbI, PsbJ, PsbK, PsbL, PsbM, PsbT, PsbX, PsbY, PsbZ, Psb30/Ycf12, at least 3 peripheral proteins of the oxygen-evolving complex and a large number of cofactors. It forms dimeric complexes. It depends on The D1/D2 heterodimer binds P680, chlorophylls that are the primary electron donor of PSII, and subsequent electron acceptors. It shares a non-heme iron and each subunit binds pheophytin, quinone, additional chlorophylls, carotenoids and lipids. D1 provides most of the ligands for the Mn4-Ca-O5 cluster of the oxygen-evolving complex (OEC). There is also a Cl(-1) ion associated with D1 and D2, which is required for oxygen evolution. The PSII complex binds additional chlorophylls, carotenoids and specific lipids. as a cofactor. Tyr-161 forms a radical intermediate that is referred to as redox-active TyrZ, YZ or Y-Z. Post-translationally, C-terminally processed by CTPA; processing is essential to allow assembly of the oxygen-evolving complex and thus photosynthetic growth.

The protein localises to the plastid. The protein resides in the chloroplast thylakoid membrane. The enzyme catalyses 2 a plastoquinone + 4 hnu + 2 H2O = 2 a plastoquinol + O2. Photosystem II (PSII) is a light-driven water:plastoquinone oxidoreductase that uses light energy to abstract electrons from H(2)O, generating O(2) and a proton gradient subsequently used for ATP formation. It consists of a core antenna complex that captures photons, and an electron transfer chain that converts photonic excitation into a charge separation. The D1/D2 (PsbA/PsbD) reaction center heterodimer binds P680, the primary electron donor of PSII as well as several subsequent electron acceptors. The sequence is that of Photosystem II protein D1 from Phaseolus vulgaris (Kidney bean).